The primary structure comprises 509 residues: Transcription factor SOX-9 (509 aa).

Disordered regions lie at residues 1 to 67 (MNLL…SEED) and 160 to 273 (RLRV…FRDV). Residues 30–41 (SAGSPCPSGSGS) are compositionally biased toward low complexity. Polar residues predominate over residues 42–52 (DTENTRPQENT). Composition is skewed to basic and acidic residues over residues 56 to 67 (GEPDLKKESEED) and 160 to 174 (RLRVQHKKDHPDYKY). Residues 63–103 (ESEEDKFPVCIREAVSQVLKGYDWTLVPMPVRVNGSSKNKP) form a dimerization (DIM) region. The interval 63 to 103 (ESEEDKFPVCIREAVSQVLKGYDWTLVPMPVRVNGSSKNKP) is PQA. At Ser64 the chain carries Phosphoserine. The HMG box DNA-binding region spans 105–173 (VKRPMNAFMV…QHKKDHPDYK (69 aa)). The residue at position 211 (Ser211) is a Phosphoserine. The interval 224-307 (PGEHSGQSQG…LPPNGHPGVP (84 aa)) is transactivation domain (TAM). Short sequence motifs (9aaTAD) lie at residues 275-284 (IGELSSDVIS) and 290-298 (DVNEFDQYL). The tract at residues 334 to 415 (VWMSKQQAPP…HYSEQQQHSP (82 aa)) is disordered. Residues 341-376 (APPPPPQQPPQAPPAPQAPPQPQAAPPQQPAAPPQQ) show a composition bias toward pro residues. Positions 380–415 (HTLTTLSSEPGQSQRTHIKTEQLSPSHYSEQQQHSP) are enriched in polar residues. The tract at residues 394–509 (RTHIKTEQLS…QPVYTQLTRP (116 aa)) is transactivation domain (TAC). Lys398 is covalently cross-linked (Glycyl lysine isopeptide (Lys-Gly) (interchain with G-Cter in ubiquitin)). Positions 460–468 (TGLYSTFTY) match the 9aaTAD 3 motif. The segment at 479–509 (PIADTSGVPSIPQTHSPQHWEQPVYTQLTRP) is disordered. Residues 485–509 (GVPSIPQTHSPQHWEQPVYTQLTRP) show a composition bias toward polar residues.

As to quaternary structure, homodimer; homodimerization is required for activity. Interacts (via C-terminus) with ZNF219; forming a complex that binds to the COL2A1 promoter and activates COL2A1 expression. Interacts with DDRGK1. Interacts with EP300/p300. Interacts with beta-catenin (CTNNB1); inhibiting CTNNB1 activity by competing with the binding sites of TCF/LEF within CTNNB1. Acetylated; acetylation impairs nuclear localization and ability to transactivate expression of target genes. Deacetylated by SIRT1. In terms of processing, phosphorylation at Ser-64 and Ser-211 by PKA increases transcriptional activity and may help delay chondrocyte maturation downstream of PTHLH/PTHrP signaling. Phosphorylation at either Ser-64 or Ser-211 is required for sumoylation, but phosphorylation is not dependent on sumoylation. Phosphorylated on tyrosine residues; tyrosine dephosphorylation by PTPN11/SHP2 blocks SOX9 phosphorylation by PKA and subsequent SUMOylation. Post-translationally, sumoylated; phosphorylation at either Ser-64 or Ser-211 is required for sumoylation. Sumoylation is induced by BMP signaling pathway. Ubiquitinated; ubiquitination leads to proteasomal degradation and is negatively regulated by DDRGK1.

The protein localises to the nucleus. Functionally, transcription factor that plays a key role in chondrocytes differentiation and skeletal development. Specifically binds the 5'-ACAAAG-3' DNA motif present in enhancers and super-enhancers and promotes expression of genes important for chondrogenesis, including cartilage matrix protein-coding genes COL2A1, COL4A2, COL9A1, COL11A2 and ACAN, SOX5 and SOX6. Also binds to some promoter regions. Plays a central role in successive steps of chondrocyte differentiation. Absolutely required for precartilaginous condensation, the first step in chondrogenesis during which skeletal progenitors differentiate into prechondrocytes. Together with SOX5 and SOX6, required for overt chondrogenesis when condensed prechondrocytes differentiate into early stage chondrocytes, the second step in chondrogenesis. Later, required to direct hypertrophic maturation and block osteoblast differentiation of growth plate chondrocytes: maintains chondrocyte columnar proliferation, delays prehypertrophy and then prevents osteoblastic differentiation of chondrocytes by lowering beta-catenin (CTNNB1) signaling and RUNX2 expression. Also required for chondrocyte hypertrophy, both indirectly, by keeping the lineage fate of chondrocytes, and directly, by remaining present in upper hypertrophic cells and transactivating COL10A1 along with MEF2C. Low lipid levels are the main nutritional determinant for chondrogenic commitment of skeletal progenitor cells: when lipids levels are low, FOXO (FOXO1 and FOXO3) transcription factors promote expression of SOX9, which induces chondrogenic commitment and suppresses fatty acid oxidation. Mechanistically, helps, but is not required, to remove epigenetic signatures of transcriptional repression and deposit active promoter and enhancer marks at chondrocyte-specific genes. Acts in cooperation with the Hedgehog pathway-dependent GLI (GLI1 and GLI3) transcription factors. In addition to cartilage development, also acts as a regulator of proliferation and differentiation in epithelial stem/progenitor cells: involved in the lung epithelium during branching morphogenesis, by balancing proliferation and differentiation and regulating the extracellular matrix. Controls epithelial branching during kidney development. This is Transcription factor SOX-9 (SOX9) from Callithrix jacchus (White-tufted-ear marmoset).